The sequence spans 357 residues: DNA integrity scanning protein DisA (357 aa).

Residues 8 to 146 (VKSMINILQL…GNLRYTLKDI (139 aa)) form the DAC domain. Residues G75, L93, and 106 to 110 (MRHRT) contribute to the ATP site.

It belongs to the DisA family. Homooctamer. The cofactor is Mg(2+).

The enzyme catalyses 2 ATP = 3',3'-c-di-AMP + 2 diphosphate. Its function is as follows. Participates in a DNA-damage check-point that is active prior to asymmetric division when DNA is damaged. DisA forms globular foci that rapidly scan along the chromosomes during sporulation, searching for lesions. When a lesion is present, DisA pauses at the lesion site. This triggers a cellular response that culminates in a temporary block in sporulation initiation. Functionally, also has diadenylate cyclase activity, catalyzing the condensation of 2 ATP molecules into cyclic di-AMP (c-di-AMP). c-di-AMP acts as a signaling molecule that couples DNA integrity with progression of sporulation. The rise in c-di-AMP level generated by DisA while scanning the chromosome, operates as a positive signal that advances sporulation; upon encountering a lesion, the DisA focus arrests at the damaged site and halts c-di-AMP synthesis. The sequence is that of DNA integrity scanning protein DisA from Bacillus mycoides (strain KBAB4) (Bacillus weihenstephanensis).